Consider the following 429-residue polypeptide: UPF0761 membrane protein ABO_1543 (429 aa).

Helical transmembrane passes span 45-65, 102-122, 141-161, 184-204, 216-236, and 256-278; these read LFAI…VPAL, LTVL…STVE, LLMY…GLAI, WLAV…YTVV, LGAA…TFFI, and LLWI…ALVV.

It belongs to the UPF0761 family.

The protein resides in the cell inner membrane. This Alcanivorax borkumensis (strain ATCC 700651 / DSM 11573 / NCIMB 13689 / SK2) protein is UPF0761 membrane protein ABO_1543.